The primary structure comprises 123 residues: MPKKSGSAAGRNVRIADQIQRDLAELIQREIKNPAMGLVTLQSVTLTPDYAHAKIYFTVLGAEPEVAGAILNEKAGYLHSLLFKRLHIHTVPTLHFHFDGSVERGIEMSRLIDEANATRAKDD.

Belongs to the RbfA family. As to quaternary structure, monomer. Binds 30S ribosomal subunits, but not 50S ribosomal subunits or 70S ribosomes.

It is found in the cytoplasm. Functionally, one of several proteins that assist in the late maturation steps of the functional core of the 30S ribosomal subunit. Associates with free 30S ribosomal subunits (but not with 30S subunits that are part of 70S ribosomes or polysomes). Required for efficient processing of 16S rRNA. May interact with the 5'-terminal helix region of 16S rRNA. This Ralstonia pickettii (strain 12J) protein is Ribosome-binding factor A.